Consider the following 470-residue polypeptide: Cell division protein FtsP (470 aa).

Residues 1-27 (MSLSRRQFIQASGIALCAGAVPLKASA) constitute a signal peptide (tat-type signal). In terms of domain architecture, Plastocyanin-like spans 229–287 (VRLRLLNASNSRRYQLQMSDGRPLHVISGDQGFLPAPVSVKQLSLAPGERREILVDMSN).

Belongs to the FtsP family. Post-translationally, predicted to be exported by the Tat system. The position of the signal peptide cleavage has not been experimentally proven.

The protein localises to the periplasm. Cell division protein that is required for growth during stress conditions. May be involved in protecting or stabilizing the divisomal assembly under conditions of stress. The chain is Cell division protein FtsP from Shigella dysenteriae serotype 1 (strain Sd197).